The primary structure comprises 77 residues: MSKAGAPDLKKYLDRQVFVQLNGSRKVYGVLRGYDIFLNIVLEDSIEEKVDGEKVKIGSVAIRGNSVIMIETLDKMT.

The region spanning Ala4 to Met76 is the Sm domain.

This sequence belongs to the snRNP Sm proteins family. As to quaternary structure, belongs to the 40S cdc5-associated complex (or cwf complex), a spliceosome sub-complex reminiscent of a late-stage spliceosome composed of the U2, U5 and U6 snRNAs and at least brr2, cdc5, cwf2/prp3, cwf3/syf1, cwf4/syf3, cwf5/ecm2, spp42/cwf6, cwf7/spf27, cwf8, cwf9, cwf10, cwf11, cwf12, prp45/cwf13, cwf14, cwf15, cwf16, cwf17, cwf18, cwf19, cwf20, cwf21, cwf22, cwf23, cwf24, cwf25, cwf26, cyp7/cwf27, cwf28, cwf29/ist3, lea1, msl1, prp5/cwf1, prp10, prp12/sap130, prp17, prp22, sap61, sap62, sap114, sap145, slu7, smb1, smd1, smd3, smf1, smg1 and syf2.

It localises to the nucleus. The protein resides in the cytoplasm. Functionally, plays a role in pre-mRNA splicing as a core component of the spliceosomal U1, U2, U4 and U5 small nuclear ribonucleoproteins (snRNPs), the building blocks of the spliceosome. The sequence is that of Small nuclear ribonucleoprotein G (smg1) from Schizosaccharomyces pombe (strain 972 / ATCC 24843) (Fission yeast).